The sequence spans 227 residues: Urease accessory protein UreF (227 aa).

This sequence belongs to the UreF family. As to quaternary structure, ureD, UreF and UreG form a complex that acts as a GTP-hydrolysis-dependent molecular chaperone, activating the urease apoprotein by helping to assemble the nickel containing metallocenter of UreC. The UreE protein probably delivers the nickel.

The protein localises to the cytoplasm. Functionally, required for maturation of urease via the functional incorporation of the urease nickel metallocenter. The polypeptide is Urease accessory protein UreF (Shewanella halifaxensis (strain HAW-EB4)).